Here is a 128-residue protein sequence, read N- to C-terminus: MSILGVGIDILSILRIKRIIKNKLGTKFSQKILSNYELNILPNCKQNYTKFLANRFSVKEAASKALGTGIRNGLKFSDLELHHDKNGKPYLKFLKQAKKMLQAMNTKSTHVSLSDEKLYVCAIVIFED.

Asp-9 and Glu-60 together coordinate Mg(2+).

This sequence belongs to the P-Pant transferase superfamily. AcpS family. Mg(2+) is required as a cofactor.

Its subcellular location is the cytoplasm. The enzyme catalyses apo-[ACP] + CoA = holo-[ACP] + adenosine 3',5'-bisphosphate + H(+). Its function is as follows. Transfers the 4'-phosphopantetheine moiety from coenzyme A to a Ser of acyl-carrier-protein. This is Holo-[acyl-carrier-protein] synthase from Buchnera aphidicola subsp. Baizongia pistaciae (strain Bp).